The chain runs to 135 residues: Large ribosomal subunit protein bL17 (135 aa).

It belongs to the bacterial ribosomal protein bL17 family. As to quaternary structure, part of the 50S ribosomal subunit. Contacts protein L32.

This is Large ribosomal subunit protein bL17 from Listeria monocytogenes serotype 4b (strain CLIP80459).